Reading from the N-terminus, the 163-residue chain is Probable cyclic pyranopterin monophosphate synthase (163 aa).

The interval M1–V23 is disordered. Substrate is bound by residues M80–H82 and M116–E117. D131 is a catalytic residue.

The protein belongs to the MoaC family. In terms of assembly, homohexamer; trimer of dimers.

The enzyme catalyses (8S)-3',8-cyclo-7,8-dihydroguanosine 5'-triphosphate = cyclic pyranopterin phosphate + diphosphate. The protein operates within cofactor biosynthesis; molybdopterin biosynthesis. Its function is as follows. Catalyzes the conversion of (8S)-3',8-cyclo-7,8-dihydroguanosine 5'-triphosphate to cyclic pyranopterin monophosphate (cPMP). The polypeptide is Probable cyclic pyranopterin monophosphate synthase (Halobacterium salinarum (strain ATCC 29341 / DSM 671 / R1)).